The primary structure comprises 356 residues: UDP-N-acetylglucosamine--N-acetylmuramyl-(pentapeptide) pyrophosphoryl-undecaprenol N-acetylglucosamine transferase (356 aa).

UDP-N-acetyl-alpha-D-glucosamine-binding residues include Ser-195 and Gln-287.

This sequence belongs to the glycosyltransferase 28 family. MurG subfamily.

It is found in the cell membrane. It carries out the reaction Mur2Ac(oyl-L-Ala-gamma-D-Glu-L-Lys-D-Ala-D-Ala)-di-trans,octa-cis-undecaprenyl diphosphate + UDP-N-acetyl-alpha-D-glucosamine = beta-D-GlcNAc-(1-&gt;4)-Mur2Ac(oyl-L-Ala-gamma-D-Glu-L-Lys-D-Ala-D-Ala)-di-trans,octa-cis-undecaprenyl diphosphate + UDP + H(+). Its pathway is cell wall biogenesis; peptidoglycan biosynthesis. In terms of biological role, cell wall formation. Catalyzes the transfer of a GlcNAc subunit on undecaprenyl-pyrophosphoryl-MurNAc-pentapeptide (lipid intermediate I) to form undecaprenyl-pyrophosphoryl-MurNAc-(pentapeptide)GlcNAc (lipid intermediate II). The sequence is that of UDP-N-acetylglucosamine--N-acetylmuramyl-(pentapeptide) pyrophosphoryl-undecaprenol N-acetylglucosamine transferase from Streptococcus gordonii (strain Challis / ATCC 35105 / BCRC 15272 / CH1 / DL1 / V288).